Here is a 404-residue protein sequence, read N- to C-terminus: Phosphoglycerate kinase (404 aa).

Residues 26–28 (DFN), Arg41, 64–67 (HLGR), Arg124, and Arg161 each bind substrate. Residues Lys212, Gly301, Glu332, and 359–362 (GGDS) contribute to the ATP site.

Belongs to the phosphoglycerate kinase family. Monomer.

It is found in the cytoplasm. The enzyme catalyses (2R)-3-phosphoglycerate + ATP = (2R)-3-phospho-glyceroyl phosphate + ADP. The protein operates within carbohydrate degradation; glycolysis; pyruvate from D-glyceraldehyde 3-phosphate: step 2/5. The chain is Phosphoglycerate kinase from Mesomycoplasma hyopneumoniae (strain 232) (Mycoplasma hyopneumoniae).